The sequence spans 743 residues: MKKHPLHMLGRLVAGKNTQWITLSVWILITLLLSFTLPQVNSTKEPNPKNLPETAMSQQAEALMKKEFPNNAGNPLLVVWYRDGGLQSQDYKLIQDVYKELKASPLKEQSTLPPFDTIPEQVLSKSASKDGTSFVTPVFFNKSAGTDILKENLDDLRNIVNSKVDEDPFKRKINDAGLHVRLSGPVGIQTDAVSLFSQADVKLLVATVLLVLVLLILLYRSPILAILPLLVVGFAYGIISPTLGFLADHGWIKVDAQAISIMTVLLFGAGTDYCLFLISRYREYLLEEESKYKALQLAIKASGGAIIMSALTVVLGLGTLLLAHYGAFHRFAVPFSVAVFIMGIAALTILPAFLLIFGRTAFFPFIPRTTSMNEELARRKKKVVKVKKSKGAFSKKLGDVVVRRPWTIIMLTVFVLGGLASFVPRIQYTYDLLESFPKDMPSREGFTLISDHFSAGELAPVKVIVDTKGKELPIKEELEKFSFVNTVKDPKEGKENKQIQMYEVSLAENPYSIEALDQIPKLKNSVEKVFKDAGISNAEDQLWIGGETASLYDTKQITERDEAVIIPVMISIIALLLLVYLRSIVAMIYLIVTVVLSFFSALGAGWLLLHYGMGAPAIQGAIPLYAFVFLVALGEDYNIFMVSEIWKNRKTQNHLDAVKNGVIQTGSVITSAGLILAGTFAVLGTLPIQVLVQFGIVTAIGVLLDTFIVRPLLVPAITVVLGRFAFWPGKLSRKSEEVQKVDA.

Helical transmembrane passes span 20–40 (WITL…LPQV), 199–219 (ADVK…ILLY), 223–243 (ILAI…SPTL), 258–278 (AISI…LFLI), 303–323 (GGAI…LLLA), 337–357 (VAVF…LLIF), 406–426 (WTII…VPRI), 561–581 (DEAV…LVYL), 584–604 (IVAM…ALGA), 613–633 (MGAP…LVAL), 672–692 (AGLI…QVLV), and 694–714 (FGIV…PLLV).

It belongs to the resistance-nodulation-cell division (RND) (TC 2.A.6) family. MmpL subfamily.

It is found in the cell membrane. Exports the siderophore petrobactin. This is Apo-petrobactin exporter from Bacillus anthracis.